A 351-amino-acid polypeptide reads, in one-letter code: Protein arginine N-methyltransferase 1 (351 aa).

An SAM-dependent MTase PRMT-type domain is found at 30-331 (KDYYFDSYAH…KNNRDLDFTV (302 aa)). The S-adenosyl-L-methionine site is built by histidine 43, arginine 52, glycine 76, glutamate 98, and glutamate 127. Catalysis depends on residues glutamate 142 and glutamate 151.

The protein belongs to the class I-like SAM-binding methyltransferase superfamily. Protein arginine N-methyltransferase family. As to quaternary structure, homodimer. Homooctamer; individual homodimers associates to form a homooctamer and homooligomerization is required for proper localization to the cell membrane. Individual homodimers can associate to form a homohexamer. Component of a complex with lsm14a/rap55a. Interacts with cirbp.

The protein resides in the nucleus. Its subcellular location is the nucleoplasm. It localises to the cytoplasm. The protein localises to the cytosol. The catalysed reaction is L-arginyl-[protein] + 2 S-adenosyl-L-methionine = N(omega),N(omega)-dimethyl-L-arginyl-[protein] + 2 S-adenosyl-L-homocysteine + 2 H(+). It catalyses the reaction L-arginyl-[protein] + S-adenosyl-L-methionine = N(omega)-methyl-L-arginyl-[protein] + S-adenosyl-L-homocysteine + H(+). The enzyme catalyses N(omega)-methyl-L-arginyl-[protein] + S-adenosyl-L-methionine = N(omega),N(omega)-dimethyl-L-arginyl-[protein] + S-adenosyl-L-homocysteine + H(+). Functionally, arginine methyltransferase that methylates (mono and asymmetric dimethylation) the guanidino nitrogens of arginyl residues present in target proteins. Constitutes the main enzyme that mediates monomethylation and asymmetric dimethylation of histone H4 'Arg-3' (H4R3me1 and H4R3me2a, respectively), a specific tag for epigenetic transcriptional activation. Methylates ilf3 to regulate its DNA-binding activity. Required for neural induction, playing a key role in the control of epidermal versus neural cell fate choice. Methylates cirbp to regulate its subcellular location. Acts transiently during metamorphosis as a transcription coactivator, enhancing thyroid hormone (T3) receptor (TR)-mediated transcription by enhancing TR binding to the T3 response element (TRE), and histone modification through recruitment of other coactivators. This Xenopus tropicalis (Western clawed frog) protein is Protein arginine N-methyltransferase 1.